Consider the following 462-residue polypeptide: GTPase Der (462 aa).

EngA-type G domains lie at 3-170 and 201-372; these read ITIA…TSQK and IKIA…FNSI. Residues 9–16, 57–61, 122–125, 207–214, 254–258, and 319–322 contribute to the GTP site; these read GRTNVGKS, DTPGI, NKIE, GKPNVGKS, DTAGI, and NKND. The KH-like domain occupies 373-457; it reads KKIHTSKITE…SIVLYFKSSK (85 aa).

This sequence belongs to the TRAFAC class TrmE-Era-EngA-EngB-Septin-like GTPase superfamily. EngA (Der) GTPase family. As to quaternary structure, associates with the 50S ribosomal subunit.

In terms of biological role, GTPase that plays an essential role in the late steps of ribosome biogenesis. The sequence is that of GTPase Der from Buchnera aphidicola subsp. Baizongia pistaciae (strain Bp).